The primary structure comprises 517 residues: Tyrosine 3-monooxygenase (517 aa).

Ser-33 bears the Phosphoserine; by PKA mark. His-345, His-350, and Glu-390 together coordinate Fe cation.

It belongs to the biopterin-dependent aromatic amino acid hydroxylase family. The cofactor is Fe(2+).

It is found in the cytoplasm. The protein resides in the perinuclear region. The protein localises to the cell projection. Its subcellular location is the axon. The catalysed reaction is (6R)-L-erythro-5,6,7,8-tetrahydrobiopterin + L-tyrosine + O2 = (4aS,6R)-4a-hydroxy-L-erythro-5,6,7,8-tetrahydrobiopterin + L-dopa. Its pathway is catecholamine biosynthesis; dopamine biosynthesis; dopamine from L-tyrosine: step 1/2. Phosphorylation leads to an increase in the catalytic activity. Involved in the synthesis of catecholamines, such as dopamine. Has a role in serotonin signaling. Required for normal explorative and foraging behavior. This Caenorhabditis briggsae protein is Tyrosine 3-monooxygenase (cat-2).